The sequence spans 397 residues: Nuclear RNA export factor 5 (397 aa).

The RRM domain occupies tryptophan 13–tyrosine 92. 4 LRR repeats span residues glutamate 160 to proline 185, lysine 186 to leucine 209, lysine 210 to aspartate 237, and cysteine 238 to lysine 265. The NTF2; truncated domain maps to leucine 280 to serine 367.

This sequence belongs to the NXF family. In terms of assembly, interacts with NXT1 and NXT2.

It is found in the cytoplasm. The protein resides in the nucleus. Functionally, could be involved in the export of mRNA from the nucleus to the cytoplasm. Could also have a role in polarized cytoplasmic transport and localization of mRNA in neurons. The sequence is that of Nuclear RNA export factor 5 (NXF5) from Homo sapiens (Human).